The sequence spans 194 residues: Imidazoleglycerol-phosphate dehydratase (194 aa).

It belongs to the imidazoleglycerol-phosphate dehydratase family.

It localises to the cytoplasm. It catalyses the reaction D-erythro-1-(imidazol-4-yl)glycerol 3-phosphate = 3-(imidazol-4-yl)-2-oxopropyl phosphate + H2O. It participates in amino-acid biosynthesis; L-histidine biosynthesis; L-histidine from 5-phospho-alpha-D-ribose 1-diphosphate: step 6/9. This is Imidazoleglycerol-phosphate dehydratase from Rubrobacter xylanophilus (strain DSM 9941 / JCM 11954 / NBRC 16129 / PRD-1).